Reading from the N-terminus, the 590-residue chain is Proline--tRNA ligase (590 aa).

It belongs to the class-II aminoacyl-tRNA synthetase family. ProS type 1 subfamily. As to quaternary structure, homodimer.

Its subcellular location is the cytoplasm. It catalyses the reaction tRNA(Pro) + L-proline + ATP = L-prolyl-tRNA(Pro) + AMP + diphosphate. Functionally, catalyzes the attachment of proline to tRNA(Pro) in a two-step reaction: proline is first activated by ATP to form Pro-AMP and then transferred to the acceptor end of tRNA(Pro). As ProRS can inadvertently accommodate and process non-cognate amino acids such as alanine and cysteine, to avoid such errors it has two additional distinct editing activities against alanine. One activity is designated as 'pretransfer' editing and involves the tRNA(Pro)-independent hydrolysis of activated Ala-AMP. The other activity is designated 'posttransfer' editing and involves deacylation of mischarged Ala-tRNA(Pro). The misacylated Cys-tRNA(Pro) is not edited by ProRS. This Clavibacter sepedonicus (Clavibacter michiganensis subsp. sepedonicus) protein is Proline--tRNA ligase.